The sequence spans 89 residues: Small ribosomal subunit protein uS15 (89 aa).

Belongs to the universal ribosomal protein uS15 family. In terms of assembly, part of the 30S ribosomal subunit. Forms a bridge to the 50S subunit in the 70S ribosome, contacting the 23S rRNA.

Functionally, one of the primary rRNA binding proteins, it binds directly to 16S rRNA where it helps nucleate assembly of the platform of the 30S subunit by binding and bridging several RNA helices of the 16S rRNA. In terms of biological role, forms an intersubunit bridge (bridge B4) with the 23S rRNA of the 50S subunit in the ribosome. In Ruegeria sp. (strain TM1040) (Silicibacter sp.), this protein is Small ribosomal subunit protein uS15.